Reading from the N-terminus, the 660-residue chain is Nuclear factor erythroid 2-related factor 3 (660 aa).

The segment at 120 to 214 is disordered; sequence SAVGDGGQSA…KTEEHKMACA (95 aa). Gly residues predominate over residues 123-135; sequence GDGGQSASAGGGD. Basic and acidic residues-rich tracts occupy residues 173-186 and 204-214; these read MLRE…HSSQ and SKTEEHKMACA. The region spanning 541 to 604 is the bZIP domain; it reads LIRDIRRRGK…DIMRQKLHGL (64 aa). The basic motif stretch occupies residues 543–562; it reads RDIRRRGKNKVAAQNCRKRK. Residues 566–573 are leucine-zipper; it reads ILNLEDDI.

The protein belongs to the bZIP family. CNC subfamily. In terms of assembly, heterodimer with MAFG, MAFK and other small MAF proteins that binds to the MAF recognition elements (MARE). As to expression, high level expression in brain, thymus, testis and placenta. Medium level expression in uterus, stomach and lung. Low level expression in kidney. No expression in heart, liver, spleen and ovary.

It localises to the nucleus. Functionally, activates erythroid-specific, globin gene expression. This is Nuclear factor erythroid 2-related factor 3 (Nfe2l3) from Mus musculus (Mouse).